The primary structure comprises 175 residues: Shikimate kinase (175 aa).

10-15 is an ATP binding site; the sequence is GAGKTT. Position 14 (T14) interacts with Mg(2+). The substrate site is built by D32, R56, and G78. An ATP-binding site is contributed by R116. Position 135 (R135) interacts with substrate.

This sequence belongs to the shikimate kinase family. In terms of assembly, monomer. It depends on Mg(2+) as a cofactor.

The protein localises to the cytoplasm. It carries out the reaction shikimate + ATP = 3-phosphoshikimate + ADP + H(+). It participates in metabolic intermediate biosynthesis; chorismate biosynthesis; chorismate from D-erythrose 4-phosphate and phosphoenolpyruvate: step 5/7. Its function is as follows. Catalyzes the specific phosphorylation of the 3-hydroxyl group of shikimic acid using ATP as a cosubstrate. In Aromatoleum aromaticum (strain DSM 19018 / LMG 30748 / EbN1) (Azoarcus sp. (strain EbN1)), this protein is Shikimate kinase.